Here is a 364-residue protein sequence, read N- to C-terminus: Mannose-1-phosphate guanyltransferase (364 aa).

Belongs to the transferase hexapeptide repeat family.

The protein localises to the cytoplasm. The enzyme catalyses alpha-D-mannose 1-phosphate + GTP + H(+) = GDP-alpha-D-mannose + diphosphate. It functions in the pathway nucleotide-sugar biosynthesis; GDP-alpha-D-mannose biosynthesis; GDP-alpha-D-mannose from alpha-D-mannose 1-phosphate (GTP route): step 1/1. Its function is as follows. Involved in cell wall synthesis where it is required for glycosylation. Involved in cell cycle progression through cell-size checkpoint. This Gibberella zeae (strain ATCC MYA-4620 / CBS 123657 / FGSC 9075 / NRRL 31084 / PH-1) (Wheat head blight fungus) protein is Mannose-1-phosphate guanyltransferase (MPG1).